A 190-amino-acid chain; its full sequence is Heme-binding protein 1 (190 aa).

Belongs to the HEBP family. In terms of assembly, monomer.

Its subcellular location is the cytoplasm. Functionally, may bind free porphyrinogens that may be present in the cell and thus facilitate removal of these potentially toxic compound. Binds with a high affinity to one molecule of heme or porphyrins. It binds metalloporphyrins, free porphyrins and N-methylprotoporphyrin with similar affinities. This Xenopus laevis (African clawed frog) protein is Heme-binding protein 1 (hebp1).